We begin with the raw amino-acid sequence, 336 residues long: MENMFRRVIFEKKALDYPMGRDILRQFENTDIEIRYSETGRITGIPGKDEAQSFFEGKNTLVVGVRRELDFQTCKPSANYQLPIVSGCAAMCEYCYLNTHGGKKPYVKINVNLDDILSKAGEYIEKRKPDITVFEGAAISDPVPVERYSGALKKAIEYFGKNEYSRFRFVTKYADISELLAVQHNNHTTIRFSINTPRVIKNYEHRTSSLEDRIESAYNILNSGYKTGFIVGPVFLYENWKKEYEELLKKASDKLGDKELEFEIISHRFTTSAKNKILKVFPNTKLPMDDEARKFKFGQFGYGKYVYDKDDMQEIKEFFINNINLYFNKATIKYII.

Positions 74–305 (CKPSANYQLP…KFGQFGYGKY (232 aa)) constitute a Radical SAM core domain. [4Fe-4S] cluster is bound by residues Cys88, Cys92, and Cys95. The segment at residues 215–232 (ESAYNILNSGYKTGFIVG) is a DNA-binding region (H-T-H motif).

Belongs to the radical SAM superfamily. SPL family. As to quaternary structure, monomer or homodimer. Requires [4Fe-4S] cluster as cofactor. S-adenosyl-L-methionine serves as cofactor.

The enzyme catalyses (5R)-5,6-dihydro-5-(thymidin-7-yl)thymidine in DNA = a thymidine dimer in DNA. Functionally, involved in repair of UV radiation-induced DNA damage during spore germination. Can repair thymine dimer 5-thyminyl-5,6-dihydrothymine (known as spore photoproduct (SP)) by in situ monomerization of SP to two thymines. The polypeptide is Spore photoproduct lyase (splB) (Clostridium acetobutylicum (strain ATCC 824 / DSM 792 / JCM 1419 / IAM 19013 / LMG 5710 / NBRC 13948 / NRRL B-527 / VKM B-1787 / 2291 / W)).